The sequence spans 428 residues: Dihydroorotase (428 aa).

Residues histidine 59 and histidine 61 each coordinate Zn(2+). Residues 61–63 (HFR) and asparagine 93 contribute to the substrate site. Aspartate 151, histidine 178, and histidine 231 together coordinate Zn(2+). Asparagine 277 lines the substrate pocket. Aspartate 304 provides a ligand contact to Zn(2+). Aspartate 304 is a catalytic residue. Substrate is bound by residues histidine 308 and 322-323 (FG).

This sequence belongs to the metallo-dependent hydrolases superfamily. DHOase family. Class I DHOase subfamily. The cofactor is Zn(2+).

It carries out the reaction (S)-dihydroorotate + H2O = N-carbamoyl-L-aspartate + H(+). It participates in pyrimidine metabolism; UMP biosynthesis via de novo pathway; (S)-dihydroorotate from bicarbonate: step 3/3. Catalyzes the reversible cyclization of carbamoyl aspartate to dihydroorotate. The polypeptide is Dihydroorotase (Bacillus licheniformis (strain ATCC 14580 / DSM 13 / JCM 2505 / CCUG 7422 / NBRC 12200 / NCIMB 9375 / NCTC 10341 / NRRL NRS-1264 / Gibson 46)).